A 335-amino-acid polypeptide reads, in one-letter code: Teichoic acids export ATP-binding protein TagH (335 aa).

An ABC transporter domain is found at 26 to 246; it reads IKGLFMPKSQ…YDEFVKWFNK (221 aa). 60–67 contacts ATP; the sequence is GINGSGKS.

The protein belongs to the ABC transporter superfamily. Teichoic acids exporter (TC 3.A.1.104.1) family. The complex is composed of two ATP-binding proteins (TagH) and two transmembrane proteins (TagG).

It localises to the cell membrane. The enzyme catalyses ATP + H2O + teichoic acidSide 1 = ADP + phosphate + teichoic acidSide 2.. Functionally, part of the ABC transporter complex TagGH involved in teichoic acids export. Responsible for energy coupling to the transport system. The chain is Teichoic acids export ATP-binding protein TagH from Listeria innocua serovar 6a (strain ATCC BAA-680 / CLIP 11262).